The sequence spans 115 residues: Pancreatic progenitor cell differentiation and proliferation factor B (115 aa).

A disordered region spans residues 21–48; sequence IGSTSSSSSCGSSEYSGEVIPHHPGLPK. The segment covering 22–37 has biased composition (low complexity); sequence GSTSSSSSCGSSEYSG.

Belongs to the PPDPF family.

Its function is as follows. Probable regulator of exocrine pancreas development. This chain is Pancreatic progenitor cell differentiation and proliferation factor B (ppdpfb), found in Danio rerio (Zebrafish).